We begin with the raw amino-acid sequence, 90 residues long: DNA-binding protein HU-beta (90 aa).

The protein belongs to the bacterial histone-like protein family. As to quaternary structure, heterodimer of an alpha and a beta chain.

Functionally, histone-like DNA-binding protein which is capable of wrapping DNA to stabilize it, and thus to prevent its denaturation under extreme environmental conditions. The protein is DNA-binding protein HU-beta (hupB) of Escherichia coli O6:H1 (strain CFT073 / ATCC 700928 / UPEC).